Consider the following 293-residue polypeptide: Eukaryotic translation initiation factor 3 subunit G (293 aa).

Disordered stretches follow at residues 1-32 (MPSIEFDDSKPSWADQVEEEGDEGSLPSPKET) and 163-206 (STGE…QPNR). The segment covering 194-206 (GGTRRGESMQPNR) has biased composition (basic and acidic residues). The 79-residue stretch at 212–290 (ATIRVTNLSE…LILNVEWAKP (79 aa)) folds into the RRM domain.

This sequence belongs to the eIF-3 subunit G family. In terms of assembly, component of the eukaryotic translation initiation factor 3 (eIF-3) complex, which is composed of 13 subunits: eif3a, eif3b, eif3c, eif3d, eif3e, eif3f, eif3g, eif3h, eif3i, eif3j, eif3k, eif3l and eif3m.

It is found in the cytoplasm. Its function is as follows. RNA-binding component of the eukaryotic translation initiation factor 3 (eIF-3) complex, which is involved in protein synthesis of a specialized repertoire of mRNAs and, together with other initiation factors, stimulates binding of mRNA and methionyl-tRNAi to the 40S ribosome. The eIF-3 complex specifically targets and initiates translation of a subset of mRNAs involved in cell proliferation. This subunit can bind 18S rRNA. This chain is Eukaryotic translation initiation factor 3 subunit G (eif3g), found in Danio rerio (Zebrafish).